The chain runs to 307 residues: Ribonuclease Z (307 aa).

H63, H65, D67, H68, H141, D212, and H270 together coordinate Zn(2+). D67 serves as the catalytic Proton acceptor.

This sequence belongs to the RNase Z family. As to quaternary structure, homodimer. Zn(2+) serves as cofactor.

The enzyme catalyses Endonucleolytic cleavage of RNA, removing extra 3' nucleotides from tRNA precursor, generating 3' termini of tRNAs. A 3'-hydroxy group is left at the tRNA terminus and a 5'-phosphoryl group is left at the trailer molecule.. Zinc phosphodiesterase, which displays some tRNA 3'-processing endonuclease activity. Probably involved in tRNA maturation, by removing a 3'-trailer from precursor tRNA. The chain is Ribonuclease Z from Bacillus cereus (strain B4264).